Reading from the N-terminus, the 604-residue chain is MLARALLLCAAVALSGAANPCCSHPCQNRGVCMSVGFDQYKCDCTRTGFYGENCTTPEFLTRIKLLLKPTPNTVHYILTHFKGVWNIVNKISFLRNMIMRYVLTSRSHLIESPPTYNVHYSYKSWEAFSNLSYYTRALPPVPDDCPTPMGVKGRKELPDSKEVVKKVLLRRKFIPDPQGTNLMFAFFAQHFTHQFFKTDFERGPAFTKGKNHGVDLSHIYGESLERQHKLRLFKDGKMKYQMINGEMYPPTVKDTQVEMIYPPHVPEHLKFAVGQEVFGLVPGLMMYATIWLREHNRVCDVLKQEHPEWGDEQLFQTSRLILIGETIKIVIEDYVQHLSGYHFKLKFDPELLFNQQFQYQNRIAAEFNTLYHWHPLLPDVFQIDGQEYNYQQFIYNNSVLLEHGLTQFVESFTRQRAGRVAGGRNLPVAVEKVSKASIDQSREMKYQSFNEYRKRFLVKPYESFEELTGEKEMAAELEALYGDIDAMEFYPALLVEKPRPDAIFGETMVEAGAPFSLKGLMGNPICSPEYWKPSTFGGEVGFKIINTASIQSLICSNVKGCPFTSFSVQDTHLTKTVTINASSSHSGLDDINPTVLLKERSTEL.

The first 17 residues, 1–17, serve as a signal peptide directing secretion; that stretch reads MLARALLLCAAVALSGA. The EGF-like domain maps to 18 to 55; the sequence is ANPCCSHPCQNRGVCMSVGFDQYKCDCTRTGFYGENCT. 4 cysteine pairs are disulfide-bonded: C21/C32, C22/C145, C26/C42, and C44/C54. N53 is a glycosylation site (N-linked (GlcNAc...) asparagine). Residue R106 participates in substrate binding. Residue N130 is glycosylated (N-linked (GlcNAc...) asparagine). The active-site Proton acceptor is H193. Position 341 (Y341) interacts with substrate. The For cyclooxygenase activity role is filled by Y371. A heme b-binding site is contributed by H374. The N-linked (GlcNAc...) asparagine glycan is linked to N396. Residue C526 is modified to S-nitrosocysteine. A disulfide bond links C555 and C561. At S565 the chain carries O-acetylserine. N580 carries N-linked (GlcNAc...) asparagine glycosylation.

It belongs to the prostaglandin G/H synthase family. As to quaternary structure, homodimer. Heme b is required as a cofactor. S-nitrosylation by NOS2 (iNOS) activates enzyme activity. S-nitrosylation may take place on different Cys residues in addition to Cys-526. In terms of processing, acetylated at Ser-565 by SPHK1. During neuroinflammation, acetylation by SPHK1 promotes neuronal secretion of specialized preresolving mediators (SPMs), especially 15-R-lipoxin A4, which results in an increase of phagocytic microglia.

It localises to the microsome membrane. It is found in the endoplasmic reticulum membrane. The protein localises to the nucleus inner membrane. The protein resides in the nucleus outer membrane. It carries out the reaction (5Z,8Z,11Z,14Z)-eicosatetraenoate + AH2 + 2 O2 = prostaglandin H2 + A + H2O. It catalyses the reaction (5Z,8Z,11Z,14Z)-eicosatetraenoate + 2 O2 = prostaglandin G2. The catalysed reaction is prostaglandin G2 + AH2 = prostaglandin H2 + A + H2O. The enzyme catalyses (5Z,8Z,11Z,14Z,17Z)-eicosapentaenoate + 2 O2 = prostaglandin G3. It carries out the reaction prostaglandin G3 + AH2 = prostaglandin H3 + A + H2O. It catalyses the reaction (8Z,11Z,14Z)-eicosatrienoate + 2 O2 = prostaglandin G1. The catalysed reaction is prostaglandin G1 + AH2 = prostaglandin H1 + A + H2O. The enzyme catalyses 2-(5Z,8Z,11Z,14Z)-eicosatetraenoyl-sn-glycero-3-phosphoethanolamine + 2 O2 = 2-(prostaglandin G2)-sn-glycero-3-phosphoethanolamine. It carries out the reaction 2-(prostaglandin G2)-sn-glycero-3-phosphoethanolamine + AH2 = 2-(prostaglandin H2)-sn-glycero-3-phosphoethanolamine + A + H2O. It catalyses the reaction 2-(5Z,8Z,11Z,14Z)-eicosatetraenoyl-sn-glycero-3-phosphocholine + 2 O2 = 2-(prostaglandin G2)-sn-glycero-3-phosphocholine. The catalysed reaction is 2-(prostaglandin G2)-sn-glycero-3-phosphocholine + AH2 = 2-(prostaglandin H2)-sn-glycero-3-phosphocholine + A + H2O. The enzyme catalyses (15S)-hydroperoxy-(5Z,8Z,11Z,13E)-eicosatetraenoate + AH2 = (15S)-hydroxy-(5Z,8Z,11Z,13E)-eicosatetraenoate + A + H2O. It carries out the reaction 2-(5Z,8Z,11Z,14Z)-eicosatetraenoyl-sn-glycero-3-phosphocholine + AH2 + O2 = 2-[(15S)-hydroxy-(5Z,8Z,11Z,13E)-eicosatetraenoyl]-sn-glycero-3-phosphocholine + A + H2O. It catalyses the reaction 2-(5Z,8Z,11Z,14Z)-eicosatetraenoyl-sn-glycero-3-phosphocholine + AH2 + O2 = 2-[(15R)-hydroxy-(5Z,8Z,11Z,13E)-eicosatetraenoyl]-sn-glycero-3-phosphocholine + A + H2O. The catalysed reaction is 2-(5Z,8Z,11Z,14Z)-eicosatetraenoyl-sn-glycero-3-phosphocholine + AH2 + O2 = 2-[(11R)-hydroxy-(5Z,8Z,12E,14Z)-eicosatetraenoyl]-sn-glycero-3-phosphocholine + A + H2O. The enzyme catalyses (9Z,12Z)-octadecadienoate + AH2 + O2 = 9-hydroxy-(10E,12Z)-octadecadienoate + A + H2O. It carries out the reaction (9Z,12Z)-octadecadienoate + AH2 + O2 = 13-hydroxy-(9Z,11E)-octadecadienoate + A + H2O. It catalyses the reaction (5Z,8Z,11Z,14Z)-eicosatetraenoate + AH2 + O2 = (15R)-hydroxy-(5Z,8Z,11Z,13E)-eicosatetraenoate + A + H2O. The catalysed reaction is (5Z,8Z,11Z,14Z)-eicosatetraenoate + AH2 + O2 = (11R)-hydroxy-(5Z,8Z,12E,14Z)-eicosatetraenoate + A + H2O. The enzyme catalyses (5Z,8Z,11Z,14Z,17Z)-eicosapentaenoate + AH2 + O2 = (11R)-hydroxy-(5Z,8Z,12E,14Z,17Z)-eicosapentaenoate + A + H2O. It carries out the reaction (5Z,8Z,11Z,14Z,17Z)-eicosapentaenoate + AH2 + O2 = (18S)-hydroxy-(5Z,8Z,11Z,14Z,16E)-eicosapentaenoate + A + H2O. It catalyses the reaction (5Z,8Z,11Z,14Z,17Z)-eicosapentaenoate + AH2 + O2 = (18R)-hydroxy-(5Z,8Z,11Z,14Z,16E)-eicosapentaenoate + A + H2O. The catalysed reaction is (5Z,8Z,11Z,14Z,17Z)-eicosapentaenoate + AH2 + O2 = (15R)-hydroxy-(5Z,8Z,11Z,13E,17Z)-eicosapentaenoate + A + H2O. The enzyme catalyses (5Z,8Z,11Z,14Z,17Z)-eicosapentaenoate + AH2 + O2 = (15S)-hydroxy-(5Z,8Z,11Z,13E,17Z)-eicosapentaenoate + A + H2O. It carries out the reaction (7Z,10Z,13Z,16Z,19Z)-docosapentaenoate + AH2 + O2 = 13R-hydroxy-(7Z,10Z,14E,16Z,19Z)-docosapentaenoate + A + H2O. It catalyses the reaction (4Z,7Z,10Z,13Z,16Z,19Z)-docosahexaenoate + AH2 + O2 = 13-hydroxy-(4Z,7Z,10Z,14E,16Z,19Z)-docosahexaenoate + A + H2O. The catalysed reaction is (5S)-hydroxy-(6E,8Z,11Z,14Z)-eicosatetraenoate + AH2 + O2 = (5S,15R)-dihydroxy-(6E,8Z,11Z,13E)-eicosatetraenoate + A + H2O. The enzyme catalyses (4Z,7Z,10Z,13Z,16Z,19Z)-docosahexaenoate + AH2 + O2 = 17R-hydroxy-(4Z,7Z,10Z,13Z,15E,19Z)-docosahexaenoate + A + H2O. It carries out the reaction (5S)-hydroxy-(6E,8Z,11Z,14Z)-eicosatetraenoate + AH2 + O2 = (5S,15S)-dihydroxy-(6E,8Z,11Z,13E)-eicosatetraenoate + A + H2O. It catalyses the reaction (5S)-hydroxy-(6E,8Z,11Z,14Z)-eicosatetraenoate + AH2 + O2 = (5S,11R)-dihydroxy-(6E,8Z,12E,14Z)-eicosatetraenoate + A + H2O. The catalysed reaction is 2-(5Z,8Z,11Z,14Z-eicosatetraenoyl)-glycerol + 2 O2 = 2-glyceryl-prostaglandin G2. The enzyme catalyses 2-glyceryl-prostaglandin G2 + AH2 = 2-glyceryl-prostaglandin H2 + A + H2O. It carries out the reaction (5Z,8Z,11Z,14Z)-eicosatetraenoate + O2 = (15R)-hydroperoxy-(5Z,8Z,11Z,13E)-eicosatetraenoate. It catalyses the reaction (5Z,8Z,11Z,14Z)-eicosatetraenoate + O2 = 11R-hydroperoxy-(5Z,8Z,12E,14Z)-eicosatetraenoate. The catalysed reaction is (9Z,12Z)-octadecadienoate + AH2 + O2 = (9R)-hydroxy-(10E,12Z)-octadecadienoate + A + H2O. The enzyme catalyses (9Z,12Z)-octadecadienoate + AH2 + O2 = (9S)-hydroxy-(10E,12Z)-octadecadienoate + A + H2O. It carries out the reaction (9Z,12Z)-octadecadienoate + AH2 + O2 = (13S)-hydroxy-(9Z,11E)-octadecadienoate + A + H2O. It catalyses the reaction (9Z,12Z)-octadecadienoate + AH2 + O2 = (13R)-hydroxy-(9Z,11E)-octadecadienoate + A + H2O. The protein operates within lipid metabolism; prostaglandin biosynthesis. Functionally, dual cyclooxygenase and peroxidase in the biosynthesis pathway of prostanoids, a class of C20 oxylipins mainly derived from arachidonate ((5Z,8Z,11Z,14Z)-eicosatetraenoate, AA, C20:4(n-6)), with a particular role in the inflammatory response. The cyclooxygenase activity oxygenates AA to the hydroperoxy endoperoxide prostaglandin G2 (PGG2), and the peroxidase activity reduces PGG2 to the hydroxy endoperoxide prostaglandin H2 (PGH2), the precursor of all 2-series prostaglandins and thromboxanes. This complex transformation is initiated by abstraction of hydrogen at carbon 13 (with S-stereochemistry), followed by insertion of molecular O2 to form the endoperoxide bridge between carbon 9 and 11 that defines prostaglandins. The insertion of a second molecule of O2 (bis-oxygenase activity) yields a hydroperoxy group in PGG2 that is then reduced to PGH2 by two electrons. Similarly catalyzes successive cyclooxygenation and peroxidation of dihomo-gamma-linoleate (DGLA, C20:3(n-6)) and eicosapentaenoate (EPA, C20:5(n-3)) to corresponding PGH1 and PGH3, the precursors of 1- and 3-series prostaglandins. In an alternative pathway of prostanoid biosynthesis, converts 2-arachidonoyl lysophopholipids to prostanoid lysophopholipids, which are then hydrolyzed by intracellular phospholipases to release free prostanoids. Metabolizes 2-arachidonoyl glycerol yielding the glyceryl ester of PGH2, a process that can contribute to pain response. Generates lipid mediators from n-3 and n-6 polyunsaturated fatty acids (PUFAs) via a lipoxygenase-type mechanism. Oxygenates PUFAs to hydroperoxy compounds and then reduces them to corresponding alcohols. Plays a role in the generation of resolution phase interaction products (resolvins) during both sterile and infectious inflammation. Metabolizes docosahexaenoate (DHA, C22:6(n-3)) to 17R-HDHA, a precursor of the D-series resolvins (RvDs). As a component of the biosynthetic pathway of E-series resolvins (RvEs), converts eicosapentaenoate (EPA, C20:5(n-3)) primarily to 18S-HEPE that is further metabolized by ALOX5 and LTA4H to generate 18S-RvE1 and 18S-RvE2. In vascular endothelial cells, converts docosapentaenoate (DPA, C22:5(n-3)) to 13R-HDPA, a precursor for 13-series resolvins (RvTs) shown to activate macrophage phagocytosis during bacterial infection. In activated leukocytes, contributes to oxygenation of hydroxyeicosatetraenoates (HETE) to diHETES (5,15-diHETE and 5,11-diHETE). Can also use linoleate (LA, (9Z,12Z)-octadecadienoate, C18:2(n-6)) as substrate and produce hydroxyoctadecadienoates (HODEs) in a regio- and stereospecific manner, being (9R)-HODE ((9R)-hydroxy-(10E,12Z)-octadecadienoate) and (13S)-HODE ((13S)-hydroxy-(9Z,11E)-octadecadienoate) its major products. During neuroinflammation, plays a role in neuronal secretion of specialized preresolving mediators (SPMs) 15R-lipoxin A4 that regulates phagocytic microglia. In Bos taurus (Bovine), this protein is Prostaglandin G/H synthase 2 (PTGS2).